We begin with the raw amino-acid sequence, 209 residues long: Uracil phosphoribosyltransferase (209 aa).

Residues Arg79, Arg104, and 131 to 139 (DPMLATGGS) each bind 5-phospho-alpha-D-ribose 1-diphosphate. Uracil is bound by residues Ile194 and 199–201 (GDA). Asp200 is a binding site for 5-phospho-alpha-D-ribose 1-diphosphate.

Belongs to the UPRTase family. Mg(2+) is required as a cofactor.

It carries out the reaction UMP + diphosphate = 5-phospho-alpha-D-ribose 1-diphosphate + uracil. Its pathway is pyrimidine metabolism; UMP biosynthesis via salvage pathway; UMP from uracil: step 1/1. Its activity is regulated as follows. Allosterically activated by GTP. Functionally, catalyzes the conversion of uracil and 5-phospho-alpha-D-ribose 1-diphosphate (PRPP) to UMP and diphosphate. The protein is Uracil phosphoribosyltransferase of Streptococcus pyogenes serotype M49 (strain NZ131).